The following is a 593-amino-acid chain: Chromodomain Y-like protein (593 aa).

A compositionally biased stretch (polar residues) spans 1 to 14 (MGIGNSQPNSQEAQ). The disordered stretch occupies residues 1 to 30 (MGIGNSQPNSQEAQLCTLPEKAEQPTDDNT). The region spanning 56–116 (TQVESIVDKR…RHNERQKEGS (61 aa)) is the Chromo domain. The interval 56 to 304 (TQVESIVDKR…TIQTSVTGVT (249 aa)) is interaction with EZH2. Phosphoserine is present on Ser83. A disordered region spans residues 110–158 (ERQKEGSLARASRASPSNARKQISRSTHSTLSKTNSKALVVGKDHESKS). Over residues 117 to 129 (LARASRASPSNAR) the composition is skewed to low complexity. Lys130 is modified (N6,N6,N6-trimethyllysine; by EHMT2; alternate). An N6,N6-dimethyllysine; by EHMT2; alternate modification is found at Lys130. Position 130 is an N6-methyllysine; by EHMT2; alternate (Lys130). The segment covering 133–146 (SRSTHSTLSKTNSK) has biased composition (polar residues). A phosphoserine mark is found at Ser165, Ser196, and Ser211. The tract at residues 200–223 (GRTSVDGFQGESPEKLDPVDQGAE) is disordered. An acetyl-CoA-binding domain region spans residues 357–589 (SENNSLNPEV…DSMLKYLQRK (233 aa)).

In terms of assembly, forms multimers and multimerization is required for stable binding to chromatin. Interacts with HDAC1 and HDAC2 via its C-terminal acetyl-CoA-binding domain. Interacts with EZH2, EED, SUZ12, REST, EHMT1 and EHMT2. Part of a complex containing at least CDYL, REST, WIZ, SETB1, EHMT1 and EHMT2. Part of a complex containing at least CDYL, MIER1, MIER2, HDAC1 and HDAC2. Interacts with CHAF1A and CHAF1B; bridging the CAF-1 complex to the MCM2-7 (MCM) complex. Interacts with MCM3 and MCM5; bridging the CAF-1 complex to the MCM2-7 (MCM) complex. Interacts with EHMT2 and PRDM9; interaction only takes place when PRDM9 is bound to hotspot DNA. As to expression, highly expressed in testis (at protein level). Expressed in the hippocampus (at protein level). Expressed in the medial prefrontal cortex, prelimbic cortex, intralimbic cortex and cingulate cortex area (at protein level). Isoform 1: Expressed as 2 transcripts encoding the same protein, a ubiquitous transcript and a highly expressed testis-specific transcript.

The protein resides in the nucleus. The protein localises to the chromosome. It carries out the reaction L-lysyl-[protein] + acetyl-CoA = N(6)-acetyl-L-lysyl-[protein] + CoA + H(+). The enzyme catalyses 3-hydroxybutanoyl-CoA = (2E)-butenoyl-CoA + H2O. In terms of biological role, chromatin reader protein that recognizes and binds histone H3 trimethylated at 'Lys-9', dimethylated at 'Lys-27' and trimethylated at 'Lys-27' (H3K9me3, H3K27me2 and H3K27me3, respectively). Part of multimeric repressive chromatin complexes, where it is required for transmission and restoration of repressive histone marks, thereby preserving the epigenetic landscape. Required for chromatin targeting and maximal enzymatic activity of Polycomb repressive complex 2 (PRC2); acts as a positive regulator of PRC2 activity by bridging the pre-existing histone H3K27me3 and newly recruited PRC2 on neighboring nucleosomes. Acts as a corepressor for REST by facilitating histone-lysine N-methyltransferase EHMT2 recruitment and H3K9 dimethylation at REST target genes for repression. Involved in X chromosome inactivation in females: recruited to Xist RNA-coated X chromosome and facilitates propagation of H3K9me2 by anchoring EHMT2. Promotes EZH2 accumulation and H3K27me3 methylation at DNA double strand breaks (DSBs), thereby facilitating transcriptional repression at sites of DNA damage and homology-directed repair of DSBs. Required for neuronal migration during brain development by repressing expression of RHOA. By repressing the expression of SCN8A, contributes to the inhibition of intrinsic neuronal excitability and epileptogenesis. In addition to acting as a chromatin reader, acts as a hydro-lyase. Shows crotonyl-coA hydratase activity by mediating the conversion of crotonyl-CoA ((2E)-butenoyl-CoA) to beta-hydroxybutyryl-CoA (3-hydroxybutanoyl-CoA), thereby acting as a negative regulator of histone crotonylation. Histone crotonylation is required during spermatogenesis; down-regulation of histone crotonylation by CDYL regulates the reactivation of sex chromosome-linked genes in round spermatids and histone replacement in elongating spermatids. By regulating histone crotonylation and trimethylation of H3K27, may be involved in stress-induced depression-like behaviors, possibly by regulating VGF expression. May have histone acetyltransferase activity; such activity is however unsure in vivo. Its function is as follows. Not able to recognize and bind histone H3K9me3, histone H3K27me2 and histone H3K27me3, due to the presence of a N-terminal extension that inactivates the chromo domain. This Mus musculus (Mouse) protein is Chromodomain Y-like protein.